Reading from the N-terminus, the 156-residue chain is Small ribosomal subunit protein uS7 (156 aa).

Belongs to the universal ribosomal protein uS7 family. In terms of assembly, part of the 30S ribosomal subunit. Contacts proteins S9 and S11.

In terms of biological role, one of the primary rRNA binding proteins, it binds directly to 16S rRNA where it nucleates assembly of the head domain of the 30S subunit. Is located at the subunit interface close to the decoding center, probably blocks exit of the E-site tRNA. This chain is Small ribosomal subunit protein uS7, found in Marinobacter nauticus (strain ATCC 700491 / DSM 11845 / VT8) (Marinobacter aquaeolei).